The sequence spans 115 residues: Probable mycobacterial cidal antitoxin Rv3188 (115 aa).

Belongs to the MbcA/ParS/Xre antitoxin family. In terms of assembly, forms a heterotetramer with cognate toxin Rv3189.

In terms of biological role, probable antitoxin component of a type II toxin-antitoxin (TA) system. Neutralizes the activity of cognate toxin Rv3189 by blocking access to the toxin active site. The chain is Probable mycobacterial cidal antitoxin Rv3188 from Mycobacterium tuberculosis (strain ATCC 25618 / H37Rv).